A 58-amino-acid chain; its full sequence is Metallothionein (58 aa).

Residues 1 to 29 (MPGPCCNDVCECAAGGCKTGCVCTSCRCS) form a beta region. 18 residues coordinate a divalent metal cation: Cys-5, Cys-6, Cys-10, Cys-12, Cys-17, Cys-21, Cys-23, Cys-26, Cys-28, Cys-31, Cys-34, Cys-38, Cys-40, Cys-46, Cys-50, Cys-54, Cys-56, and Cys-57. The segment at 30–58 (PCDKCTSGCKCPSKEECAKTCSKPCECCP) is alpha.

Metallothioneins have a high content of cysteine residues that bind various heavy metals. Class I MTS in crustacea are involved in the sequestration of elevated levels of heavy-metal ions. The chain is Metallothionein from Astacus astacus (Noble crayfish).